Here is a 180-residue protein sequence, read N- to C-terminus: NADH-quinone oxidoreductase subunit I (180 aa).

2 4Fe-4S ferredoxin-type domains span residues 50 to 80 (LTRNIDGGERCVACNLCAVVCPVDCISLQKS) and 90 to 119 (KFFRINFSRCIFCGLCEEACPTAAIQLMPD). [4Fe-4S] cluster is bound by residues Cys60, Cys63, Cys66, Cys70, Cys99, Cys102, Cys105, and Cys109.

This sequence belongs to the complex I 23 kDa subunit family. NDH-1 is composed of 13 different subunits. Subunits NuoA, H, J, K, L, M, N constitute the membrane sector of the complex. It depends on [4Fe-4S] cluster as a cofactor.

The protein resides in the cell membrane. It catalyses the reaction a quinone + NADH + 5 H(+)(in) = a quinol + NAD(+) + 4 H(+)(out). NDH-1 shuttles electrons from NADH, via FMN and iron-sulfur (Fe-S) centers, to quinones in the respiratory chain. The immediate electron acceptor for the enzyme in this species is believed to be ubiquinone. Couples the redox reaction to proton translocation (for every two electrons transferred, four hydrogen ions are translocated across the cytoplasmic membrane), and thus conserves the redox energy in a proton gradient. This chain is NADH-quinone oxidoreductase subunit I, found in Buchnera aphidicola subsp. Schizaphis graminum (strain Sg).